The primary structure comprises 481 residues: G-protein coupled receptor 37-like 1 (481 aa).

The first 24 residues, 1 to 24 (MRWLWPLAVSLAVVLAVGPSEVSG), serve as a signal peptide directing secretion. Residues 25 to 134 (AATLSLGGHR…ESSYSAYAVM (110 aa)) lie on the Extracellular side of the membrane. 2 disordered regions span residues 30–55 (LGGH…GPKE) and 76–107 (LQPT…TNLT). Residues 95–107 (TSESGQELRTNLT) show a composition bias toward polar residues. N-linked (GlcNAc...) asparagine glycosylation occurs at Asn105. A helical membrane pass occupies residues 135 to 155 (LLALVVFAVGIVGNLSVMCIV). Over 156 to 167 (WHSYYLKSAWNS) the chain is Cytoplasmic. The chain crosses the membrane as a helical span at residues 168–188 (ILASLALWDFLVLFFCLPIVI). The Extracellular portion of the chain corresponds to 189–205 (FNEITKQRLLGDVSCRA). Cys203 and Cys286 are joined by a disulfide. Residues 206–226 (VPFMEVSSLGVTTFSLCALGI) form a helical membrane-spanning segment. The Cytoplasmic segment spans residues 227–251 (DRFHVATSTLPKVRPIERCQSILAK). The chain crosses the membrane as a helical span at residues 252–272 (LAVIWVGSMMLAVPELLLWQL). Residues 273–310 (AQEPTPTMGTVDSCIMKPSADLPESLYSLVMTYQNARM) are Extracellular-facing. Residues 311-331 (WWYFGCYFCLPILFTVTCQLV) form a helical membrane-spanning segment. At 332–360 (TWRVRGPPGRKPECRAGRHEQCESQLNST) the chain is on the cytoplasmic side. Residues 361–381 (VVGLTVVYAFCTLPENICNIV) traverse the membrane as a helical segment. At 382–398 (VAYLSTELTRQTLDLLG) the chain is on the extracellular side. The chain crosses the membrane as a helical span at residues 399–419 (LINQFSTFFKGAITPVLLLCI). Residues 420–481 (CRPLGQAFLD…PPLLPLGTPC (62 aa)) are Cytoplasmic-facing. Ser471 carries the phosphoserine modification. Thr479 bears the Phosphothreonine mark.

The protein belongs to the G-protein coupled receptor 1 family. As to quaternary structure, interacts with the PTCH1 receptor. Undergoes metalloprotease-mediated cleavage which reduces its constitutive activity. In terms of processing, ubiquitinated. Highly expressed in brain.

It is found in the cell membrane. The protein resides in the cell projection. The protein localises to the cilium membrane. Its function is as follows. G-protein coupled receptor. Has been shown to bind the neuroprotective and glioprotective factor prosaposin (PSAP), leading to endocytosis followed by an ERK phosphorylation cascade. However, other studies have shown that prosaposin does not increase activity. It has been suggested that GPR37L1 is a constitutively active receptor which signals through the guanine nucleotide-binding protein G(s) subunit alpha. Participates in the regulation of postnatal cerebellar development by modulating the Shh pathway. Regulates baseline blood pressure in females and protects against cardiovascular stress in males. Mediates inhibition of astrocyte glutamate transporters and reduction in neuronal N-methyl-D-aspartate receptor activity. The polypeptide is G-protein coupled receptor 37-like 1 (Gpr37l1) (Rattus norvegicus (Rat)).